The chain runs to 517 residues: BTB/POZ domain-containing protein At3g49900 (517 aa).

Over residues 28-37 (SSSSSSLSLS) the composition is skewed to low complexity. The segment at 28–49 (SSSSSSLSLSPKQPINLSSSPS) is disordered. The segment covering 38–49 (PKQPINLSSSPS) has biased composition (polar residues). The BTB domain occupies 67–130 (PDVFVNVGGT…CYGAHIELTP (64 aa)). In terms of domain architecture, NPH3 spans 224–307 (LPAGDFNVVA…VRAMLQEQLN (84 aa)). Residues 409–456 (ARSASFHCVHQPSNVNKTQRGDRGSVSNLSTTYRRRRASPPQAQPQKS) form a disordered region.

The protein belongs to the NPH3 family.

It participates in protein modification; protein ubiquitination. Its function is as follows. May act as a substrate-specific adapter of an E3 ubiquitin-protein ligase complex (CUL3-RBX1-BTB) which mediates the ubiquitination and subsequent proteasomal degradation of target proteins. The chain is BTB/POZ domain-containing protein At3g49900 from Arabidopsis thaliana (Mouse-ear cress).